A 399-amino-acid chain; its full sequence is Argininosuccinate synthase (399 aa).

Residue 8–16 (AYSGGLDTS) participates in ATP binding. L-citrulline is bound at residue Tyr-87. Gly-117 provides a ligand contact to ATP. L-aspartate contacts are provided by Thr-119, Asn-123, and Asp-124. An L-citrulline-binding site is contributed by Asn-123. L-citrulline is bound by residues Arg-127, Ser-175, Glu-260, and Tyr-272.

This sequence belongs to the argininosuccinate synthase family. Type 1 subfamily. In terms of assembly, homotetramer.

The protein resides in the cytoplasm. It catalyses the reaction L-citrulline + L-aspartate + ATP = 2-(N(omega)-L-arginino)succinate + AMP + diphosphate + H(+). Its pathway is amino-acid biosynthesis; L-arginine biosynthesis; L-arginine from L-ornithine and carbamoyl phosphate: step 2/3. The polypeptide is Argininosuccinate synthase (Rhodococcus erythropolis (strain PR4 / NBRC 100887)).